Consider the following 139-residue polypeptide: D-ribose pyranase (139 aa).

Residue H20 is the Proton donor of the active site. Substrate is bound by residues D28, H106, and 128–130 (YAN).

Belongs to the RbsD / FucU family. RbsD subfamily. Homodecamer.

It is found in the cytoplasm. It carries out the reaction beta-D-ribopyranose = beta-D-ribofuranose. Its pathway is carbohydrate metabolism; D-ribose degradation; D-ribose 5-phosphate from beta-D-ribopyranose: step 1/2. In terms of biological role, catalyzes the interconversion of beta-pyran and beta-furan forms of D-ribose. The protein is D-ribose pyranase of Salmonella choleraesuis (strain SC-B67).